Consider the following 382-residue polypeptide: Succinyl-diaminopimelate desuccinylase (382 aa).

H73 provides a ligand contact to Zn(2+). D75 is a catalytic residue. D106 serves as a coordination point for Zn(2+). Catalysis depends on E140, which acts as the Proton acceptor. Residues E141, E169, and H355 each coordinate Zn(2+).

Belongs to the peptidase M20A family. DapE subfamily. In terms of assembly, homodimer. Zn(2+) is required as a cofactor. Requires Co(2+) as cofactor.

It catalyses the reaction N-succinyl-(2S,6S)-2,6-diaminopimelate + H2O = (2S,6S)-2,6-diaminopimelate + succinate. The protein operates within amino-acid biosynthesis; L-lysine biosynthesis via DAP pathway; LL-2,6-diaminopimelate from (S)-tetrahydrodipicolinate (succinylase route): step 3/3. Its function is as follows. Catalyzes the hydrolysis of N-succinyl-L,L-diaminopimelic acid (SDAP), forming succinate and LL-2,6-diaminopimelate (DAP), an intermediate involved in the bacterial biosynthesis of lysine and meso-diaminopimelic acid, an essential component of bacterial cell walls. In Leptothrix cholodnii (strain ATCC 51168 / LMG 8142 / SP-6) (Leptothrix discophora (strain SP-6)), this protein is Succinyl-diaminopimelate desuccinylase.